Reading from the N-terminus, the 120-residue chain is Ribosome-binding factor A (120 aa).

Belongs to the RbfA family. In terms of assembly, monomer. Binds 30S ribosomal subunits, but not 50S ribosomal subunits or 70S ribosomes.

The protein resides in the cytoplasm. One of several proteins that assist in the late maturation steps of the functional core of the 30S ribosomal subunit. Associates with free 30S ribosomal subunits (but not with 30S subunits that are part of 70S ribosomes or polysomes). Required for efficient processing of 16S rRNA. May interact with the 5'-terminal helix region of 16S rRNA. The protein is Ribosome-binding factor A of Clostridium botulinum (strain 657 / Type Ba4).